A 100-amino-acid polypeptide reads, in one-letter code: Vesicle-associated membrane protein 8 (100 aa).

Residues 1–74 lie on the Cytoplasmic side of the membrane; sequence MEASGSAGND…ARKFWWKNVK (74 aa). Phosphoserine is present on residues serine 4 and serine 17. A v-SNARE coiled-coil homology domain is found at 11–71; sequence RVRNLQSEVE…QKVARKFWWK (61 aa). A phosphothreonine mark is found at threonine 27, threonine 47, and threonine 53. Serine 54 is subject to Phosphoserine. The chain crosses the membrane as a helical; Anchor for type IV membrane protein span at residues 75-95; that stretch reads MIVIICVIVLIILILIILFAT. The Vesicular portion of the chain corresponds to 96 to 100; it reads GTIPT.

The protein belongs to the synaptobrevin family. As to quaternary structure, forms a SNARE complex composed of VAMP8, SNAP29 and STX17 involved in fusion of autophagosome with lysosome. Found in a number of SNARE complexes with NAPA, SNAP23, SNAP25, STX1A, STX4, STX7, STX8 and VTI1B. Interacts with PICALM. SNARE complex formation and binding by PICALM are mutually exclusive processes for VAMP8. Interacts with SBF2/MTMR13. Interacts with RAB21 (in GTP-bound form) in response to starvation; the interaction probably regulates VAMP8 endolysosomal trafficking. Interacts with STX17; this interaction is increased in the absence of TMEM39A. Interacts with TRIM6. As to expression, expressed (at protein level) at a high level in kidney, lung and spleen; at a lower level in testis, liver, brain and heart. Expressed in kidney and retinal pigment epithelium derived cell line.

Its subcellular location is the lysosome membrane. It is found in the late endosome membrane. The protein resides in the early endosome membrane. It localises to the midbody. The protein localises to the cell membrane. Its subcellular location is the zymogen granule membrane. In terms of biological role, SNAREs, soluble N-ethylmaleimide-sensitive factor-attachment protein receptors, are essential proteins for fusion of cellular membranes. SNAREs localized on opposing membranes assemble to form a trans-SNARE complex, an extended, parallel four alpha-helical bundle that drives membrane fusion. VAMP8 is a SNARE involved in autophagy through the direct control of autophagosome membrane fusion with the lysososome membrane via its interaction with the STX17-SNAP29 binary t-SNARE complex. Also required for dense-granule secretion in platelets. Also plays a role in regulated enzyme secretion in pancreatic acinar cells. Involved in the abscission of the midbody during cell division, which leads to completely separate daughter cells. Involved in the homotypic fusion of early and late endosomes. Also participates in the activation of type I interferon antiviral response through a TRIM6-dependent mechanism. In Rattus norvegicus (Rat), this protein is Vesicle-associated membrane protein 8.